The sequence spans 208 residues: Truncated thymidylate kinase (208 aa).

The protein belongs to the thymidylate kinase family.

In terms of biological role, catalyzes the conversion of dTMP to dTDP. This Ornithodoros (relapsing fever ticks) protein is Truncated thymidylate kinase (TMK).